Here is a 118-residue protein sequence, read N- to C-terminus: Thioredoxin-like protein CXXS1 (118 aa).

The 109-residue stretch at 2 to 110 (ARVVKIDSAE…IKKRVDGFVQ (109 aa)) folds into the Thioredoxin domain.

The protein belongs to the thioredoxin family. Ubiquitous.

It is found in the cytoplasm. In terms of biological role, possesses low disulfide reductase activity, but efficient protein disulfide isomerase activity. Does not possess deglutathionylation activity. This Arabidopsis thaliana (Mouse-ear cress) protein is Thioredoxin-like protein CXXS1 (CXXS1).